A 595-amino-acid polypeptide reads, in one-letter code: Outer dynein arm-docking complex subunit 3 (595 aa).

The disordered stretch occupies residues 1–69 (MTSPLCRAAS…RGAGKPSVHS (69 aa)). 2 coiled-coil regions span residues 94–327 (WNIK…REHL) and 385–473 (FAQL…ASKL).

In terms of assembly, component of the outer dynein arm-docking complex along with ODAD1, ODAD2, ODAD4 and CLXN. Interacts with ODAD1. Interacts with PIERCE1 and PIERCE2; the interactions link the outer dynein arms docking complex (ODA-DC) to the internal microtubule inner proteins (MIP) in cilium axoneme.

It is found in the cytoplasm. The protein localises to the cytoskeleton. The protein resides in the cilium basal body. It localises to the microtubule organizing center. Its subcellular location is the centrosome. It is found in the centriole. The protein localises to the cilium axoneme. Its function is as follows. Component of the outer dynein arm-docking complex (ODA-DC) that mediates outer dynein arms (ODA) binding onto the doublet microtubule. Involved in mediating assembly of both ODAs and their axonemal docking complex onto ciliary microtubules. In Homo sapiens (Human), this protein is Outer dynein arm-docking complex subunit 3.